Consider the following 234-residue polypeptide: Small ribosomal subunit protein uS3 (234 aa).

The region spanning 17-86 (VEKFLTKELK…SPQVEVQQVQ (70 aa)) is the KH type-2 domain.

It belongs to the universal ribosomal protein uS3 family. In terms of assembly, part of the 30S ribosomal subunit.

Its function is as follows. Binds the lower part of the 30S subunit head. In Methanoculleus marisnigri (strain ATCC 35101 / DSM 1498 / JR1), this protein is Small ribosomal subunit protein uS3.